The chain runs to 647 residues: Putative pre-mRNA-splicing factor ATP-dependent RNA helicase C20H4.09 (647 aa).

Residues 35–199 form the Helicase ATP-binding domain; sequence LYAVEQNQIT…FGQDKVCTMS (165 aa). Residue 48 to 55 participates in ATP binding; sequence GHTGCGKT. The DEAH box signature appears at 146-149; that stretch reads DEVH. Residues 219-398 enclose the Helicase C-terminal domain; sequence YVDSAIETVI…PLVLFLKGLG (180 aa).

Belongs to the DEAD box helicase family. DEAH subfamily.

Its subcellular location is the nucleus. The catalysed reaction is ATP + H2O = ADP + phosphate + H(+). Functionally, pre-mRNA processing factor involved in disassembly of spliceosomes after the release of mature mRNA. The protein is Putative pre-mRNA-splicing factor ATP-dependent RNA helicase C20H4.09 of Schizosaccharomyces pombe (strain 972 / ATCC 24843) (Fission yeast).